The following is a 347-amino-acid chain: Ferrochelatase (347 aa).

Residues His-193 and Glu-273 each coordinate Fe cation.

This sequence belongs to the ferrochelatase family.

The protein resides in the cytoplasm. It carries out the reaction heme b + 2 H(+) = protoporphyrin IX + Fe(2+). It participates in porphyrin-containing compound metabolism; protoheme biosynthesis; protoheme from protoporphyrin-IX: step 1/1. In terms of biological role, catalyzes the ferrous insertion into protoporphyrin IX. The polypeptide is Ferrochelatase (Rickettsia canadensis (strain McKiel)).